A 90-amino-acid polypeptide reads, in one-letter code: MANHSSAKKAARQTVKRTLINKKRSSAIKTFIKKVAHEISLGNKENANLALSVAQSKIMQGVKKNIIKLNTASRKISRLSKQIKSLNESK.

Belongs to the bacterial ribosomal protein bS20 family.

Binds directly to 16S ribosomal RNA. The protein is Small ribosomal subunit protein bS20 of Rickettsia felis (strain ATCC VR-1525 / URRWXCal2) (Rickettsia azadi).